We begin with the raw amino-acid sequence, 309 residues long: Olfactory receptor 5AK2 (309 aa).

Residues methionine 1 to cysteine 25 lie on the Extracellular side of the membrane. N-linked (GlcNAc...) asparagine glycosylation occurs at asparagine 5. A helical transmembrane segment spans residues isoleucine 26 to isoleucine 46. At leucine 47–arginine 54 the chain is on the cytoplasmic side. The helical transmembrane segment at phenylalanine 55–serine 75 threads the bilayer. The Extracellular portion of the chain corresponds to alanine 76 to isoleucine 99. A disulfide bond links cysteine 97 and cysteine 189. A helical membrane pass occupies residues glutamine 100–valine 120. The Cytoplasmic segment spans residues aspartate 121–threonine 133. The chain crosses the membrane as a helical span at residues valine 134 to isoleucine 154. Residue asparagine 155 is glycosylated (N-linked (GlcNAc...) asparagine). Over asparagine 155–isoleucine 196 the chain is Extracellular. The helical transmembrane segment at methionine 197 to serine 217 threads the bilayer. The Cytoplasmic segment spans residues tyrosine 218 to serine 237. A helical transmembrane segment spans residues phenylalanine 238–methionine 258. The Extracellular segment spans residues tyrosine 259–methionine 271. Asparagine 265 carries an N-linked (GlcNAc...) asparagine glycan. The helical transmembrane segment at lysine 272–leucine 292 threads the bilayer. Residues arginine 293–phenylalanine 309 are Cytoplasmic-facing.

It belongs to the G-protein coupled receptor 1 family.

The protein resides in the cell membrane. In terms of biological role, odorant receptor. The sequence is that of Olfactory receptor 5AK2 (OR5AK2) from Homo sapiens (Human).